We begin with the raw amino-acid sequence, 427 residues long: Serine/threonine-protein kinase AFC2 (427 aa).

A Protein kinase domain is found at 98–423; it reads YKIYSKMGEG…AREALRHPFF (326 aa). ATP is bound by residues 104-112 and K127; that span reads MGEGTFGQV. The active-site Proton acceptor is the D223.

The protein belongs to the protein kinase superfamily. CMGC Ser/Thr protein kinase family. Lammer subfamily.

It carries out the reaction L-seryl-[protein] + ATP = O-phospho-L-seryl-[protein] + ADP + H(+). The enzyme catalyses L-threonyl-[protein] + ATP = O-phospho-L-threonyl-[protein] + ADP + H(+). The catalysed reaction is L-tyrosyl-[protein] + ATP = O-phospho-L-tyrosyl-[protein] + ADP + H(+). The sequence is that of Serine/threonine-protein kinase AFC2 (AFC2) from Arabidopsis thaliana (Mouse-ear cress).